Consider the following 241-residue polypeptide: 2,3,4,5-tetrahydropyridine-2,6-dicarboxylate N-acetyltransferase (241 aa).

The protein belongs to the transferase hexapeptide repeat family. DapH subfamily.

It catalyses the reaction (S)-2,3,4,5-tetrahydrodipicolinate + acetyl-CoA + H2O = L-2-acetamido-6-oxoheptanedioate + CoA. It functions in the pathway amino-acid biosynthesis; L-lysine biosynthesis via DAP pathway; LL-2,6-diaminopimelate from (S)-tetrahydrodipicolinate (acetylase route): step 1/3. Catalyzes the transfer of an acetyl group from acetyl-CoA to tetrahydrodipicolinate. This chain is 2,3,4,5-tetrahydropyridine-2,6-dicarboxylate N-acetyltransferase, found in Caldanaerobacter subterraneus subsp. tengcongensis (strain DSM 15242 / JCM 11007 / NBRC 100824 / MB4) (Thermoanaerobacter tengcongensis).